A 352-amino-acid chain; its full sequence is tRNA pseudouridine synthase D (352 aa).

Aspartate 81 acts as the Nucleophile in catalysis. A TRUD domain is found at 158-306 (GVPNYFGQQR…RHERRTLLLK (149 aa)).

Belongs to the pseudouridine synthase TruD family.

The enzyme catalyses uridine(13) in tRNA = pseudouridine(13) in tRNA. Its function is as follows. Responsible for synthesis of pseudouridine from uracil-13 in transfer RNAs. The protein is tRNA pseudouridine synthase D of Photobacterium profundum (strain SS9).